Consider the following 347-residue polypeptide: Endophilin-A3 (347 aa).

The membrane-binding amphipathic helix stretch occupies residues 1-21; the sequence is MSVAGLKKQFHKASQLFSEKI. The region spanning 18–249 is the BAR domain; sequence SEKISGAEGT…LQMRISAASS (232 aa). Residues 60-87 form a required for dimerization upon membrane association region; sequence PNPAYRAKLGMLNTVSKIRGQVKTTGYP. Positions 181–201 form a coiled coil; sequence EEVRQAVEKFEESKELAERSM. The segment at 218 to 254 is interaction with ARC; it reads FIEAALDYHRQSTEILQELQSKLQMRISAASSVPRRE. Positions 248–271 are disordered; sequence SSVPRREYKPRPVKRSSSELNGVS. Ser-265 is subject to Phosphoserine. In terms of domain architecture, SH3 spans 285–344; sequence MDQPCCRGLYDFEPENQGELGFKEGDIITLTNQIDENWYEGMIHGESGFFPINYVEVIVP.

Belongs to the endophilin family. In terms of assembly, interacts with ARC. Interacts with DNM1, SGIP1 and SYNJ1. Interacts with the huntingtin exon 1 protein (HDEX1P) containing a glutamine repeat in the pathological range and promotes formation of insoluble polyglutamine-containing aggregates in vivo. Interacts with DYDC1. Interacts with FASLG. Interacts with ATXN2. Interacts with BIN2. Brain and testis.

It localises to the cytoplasm. The protein resides in the early endosome membrane. In terms of biological role, implicated in endocytosis. May recruit other proteins to membranes with high curvature. This Homo sapiens (Human) protein is Endophilin-A3 (SH3GL3).